The primary structure comprises 402 residues: Speedy protein E5 (402 aa).

A disordered region spans residues 1-89; sequence MDRTETRFRK…EEPEKELAPE (89 aa). Residues 16 to 39 show a composition bias toward polar residues; it reads EKITTSRQPQPQNEQSPQRSTSGY. Residues 76–89 show a composition bias toward acidic residues; the sequence is DESAEEPEKELAPE.

Belongs to the Speedy/Ringo family.

In Homo sapiens (Human), this protein is Speedy protein E5 (SPDYE5).